Here is a 352-residue protein sequence, read N- to C-terminus: MEGISIYTSDNYTEEMGSGDYDSIKEPCFREENAHFNRIFLPTIYSIIFLTGIVGNGLVILVMGYQKKLRSMTDKYRLHLSVADLLFVITLPFWAVDAVANWYFGKFLCKAVHVIYTVNLYSSVLILAFISLDRYLAIVHATNSQRPRKLLAEKVVYVGVWIPALLLTIPDFIFANVSEADDRYICDRFYPNDLWVVVFQFQHIMVGLILPGIVILSCYCIIISKLSHSKGHQKRKALKTTVILILAFFACWLPYYIGISIDSFILLEIIRQGCEFENTVHKWISITEALAFFHCCLNPILYAFLGAKFKTSAQHALTSVSRGSSLKILSKGKRGGHSSVSTESESSSFHSS.

The interval 1–21 (MEGISIYTSDNYTEEMGSGDY) is important for chemokine binding and signaling. Residues 1-38 (MEGISIYTSDNYTEEMGSGDYDSIKEPCFREENAHFNR) lie on the Extracellular side of the membrane. Sulfotyrosine is present on Tyr-7. Asn-11 is a glycosylation site (N-linked (GlcNAc...) asparagine). Tyr-12 carries the post-translational modification Sulfotyrosine. An O-linked (Xyl...) (chondroitin sulfate) serine glycan is attached at Ser-18. Tyr-21 bears the Sulfotyrosine mark. Disulfide bonds link Cys-28–Cys-274 and Cys-109–Cys-186. Residues 39-63 (IFLPTIYSIIFLTGIVGNGLVILVM) traverse the membrane as a helical segment. Over 64–77 (GYQKKLRSMTDKYR) the chain is Cytoplasmic. The helical transmembrane segment at 78 to 99 (LHLSVADLLFVITLPFWAVDAV) threads the bilayer. Residues 94–97 (WAVD) are chemokine binding. The Extracellular segment spans residues 100-110 (ANWYFGKFLCK). Residues 111–130 (AVHVIYTVNLYSSVLILAFI) form a helical membrane-spanning segment. The tract at residues 113 to 117 (HVIYT) is chemokine binding. Residues 131-154 (SLDRYLAIVHATNSQRPRKLLAEK) are Cytoplasmic-facing. The Important for signaling motif lies at 133–135 (DRY). The involved in dimerization; when bound to chemokine stretch occupies residues 135 to 147 (YLAIVHATNSQRP). The chain crosses the membrane as a helical span at residues 155 to 174 (VVYVGVWIPALLLTIPDFIF). Topologically, residues 175-195 (ANVSEADDRYICDRFYPNDLW) are extracellular. The chemokine binding, important for signaling stretch occupies residues 186 to 190 (CDRFY). The interval 191-210 (PNDLWVVVFQFQHIMVGLIL) is involved in dimerization. The chain crosses the membrane as a helical span at residues 196–216 (VVVFQFQHIMVGLILPGIVIL). Residues 217-241 (SCYCIIISKLSHSKGHQKRKALKTT) are Cytoplasmic-facing. Residues 242–261 (VILILAFFACWLPYYIGISI) form a helical membrane-spanning segment. The Extracellular segment spans residues 262–282 (DSFILLEIIRQGCEFENTVHK). The interval 266 to 268 (LLE) is involved in dimerization. A helical transmembrane segment spans residues 283 to 302 (WISITEALAFFHCCLNPILY). Over 303–352 (AFLGAKFKTSAQHALTSVSRGSSLKILSKGKRGGHSSVSTESESSSFHSS) the chain is Cytoplasmic. Ser-319 and Ser-321 each carry phosphoserine. Phosphoserine; by PKC and GRK6 occurs at positions 324 and 325. The segment at 329 to 352 (LSKGKRGGHSSVSTESESSSFHSS) is disordered. Ser-330 carries the post-translational modification Phosphoserine; by GRK6. Lys-331 is covalently cross-linked (Glycyl lysine isopeptide (Lys-Gly) (interchain with G-Cter in ubiquitin)). The segment covering 337 to 352 (HSSVSTESESSSFHSS) has biased composition (low complexity). Phosphoserine; by GRK6 is present on Ser-339. Ser-348 and Ser-351 each carry phosphoserine.

Belongs to the G-protein coupled receptor 1 family. As to quaternary structure, monomer. Can form homodimers. Interacts with CD164. Interacts with ARRB2; the interaction is dependent on the C-terminal phosphorylation of CXCR4 and allows activation of MAPK1 and MAPK3. Interacts with ARR3; the interaction is dependent on the C-terminal phosphorylation of CXCR4 and modulates calcium mobilization. Interacts with RNF113A; the interaction, enhanced by CXCL12, promotes CXCR4 ubiquitination and subsequent degradation. Interacts (via the cytoplasmic C-terminal) with ITCH (via the WW domains I and II); the interaction, enhanced by CXCL12, promotes CXCR4 ubiquitination and leads to its degradation. Interacts with extracellular ubiquitin. Interacts with DBN1; this interaction is enhanced by antigenic stimulation. Following LPS binding, may form a complex with GDF5, HSP90AA1 and HSPA8. In terms of processing, phosphorylated on agonist stimulation. Rapidly phosphorylated on serine and threonine residues in the C-terminal. Phosphorylation at Ser-324 and Ser-325 leads to recruitment of ITCH, ubiquitination and protein degradation. Post-translationally, ubiquitinated after ligand binding, leading to its degradation. Ubiquitinated by ITCH at the cell membrane on agonist stimulation. The ubiquitin-dependent mechanism, endosomal sorting complex required for transport (ESCRT), then targets CXCR4 for lysosomal degradation. This process is dependent also on prior Ser-/Thr-phosphorylation in the C-terminal of CXCR4. Also binding of ARRB1 to STAM negatively regulates CXCR4 sorting to lysosomes though modulating ubiquitination of SFR5S. Sulfation is required for efficient binding of CXCL12/SDF-1alpha and promotes its dimerization. In terms of processing, O- and N-glycosylated. N-glycosylation can mask coreceptor function. The O-glycosylation chondroitin sulfate attachment does not affect interaction with CXCL12/SDF-1alpha nor its coreceptor activity.

It is found in the cell membrane. Its subcellular location is the cell junction. It localises to the early endosome. The protein localises to the late endosome. The protein resides in the lysosome. Functionally, receptor for the C-X-C chemokine CXCL12/SDF-1 that transduces a signal by increasing intracellular calcium ion levels and enhancing MAPK1/MAPK3 activation. Involved in the AKT signaling cascade. Plays a role in regulation of cell migration, e.g. during wound healing. Acts as a receptor for extracellular ubiquitin; leading to enhanced intracellular calcium ions and reduced cellular cAMP levels. Binds bacterial lipopolysaccharide (LPS) et mediates LPS-induced inflammatory response, including TNF secretion by monocytes. Involved in hematopoiesis and in cardiac ventricular septum formation. Also plays an essential role in vascularization of the gastrointestinal tract, probably by regulating vascular branching and/or remodeling processes in endothelial cells. Involved in cerebellar development. In the CNS, could mediate hippocampal-neuron survival. The sequence is that of C-X-C chemokine receptor type 4 (CXCR4) from Saimiri sciureus (Common squirrel monkey).